The following is a 240-amino-acid chain: Gas vesicle protein C (240 aa).

Basic and acidic residues predominate over residues 1–13 (MALKDKWQQDRIG). Residues 1–20 (MALKDKWQQDRIGRQQGVQE) form a disordered region. 5 consecutive repeats follow at residues 18-50 (VQER…RQGF), 51-83 (VTGV…LENF), 84-116 (IQQL…LSEF), 117-149 (REDL…LAIF), and 150-207 (RQTL…LQDY). Residues 18 to 207 (VQERQQQVQT…GVFRAELQDY (190 aa)) are 5 X 33 AA tandem repeats.

This sequence belongs to the gas vesicle GvpC family.

Its subcellular location is the gas vesicle. In terms of biological role, confers stability, involved in shaping gas vesicles, hollow, gas filled proteinaceous nanostructures. During planktonic growth they allow positioning of the organism at a favorable depth for light or nutrient acquisition. The protein is Gas vesicle protein C of Planktothrix agardhii (Oscillatoria agardhii).